Reading from the N-terminus, the 295-residue chain is Ribosomal RNA small subunit methyltransferase A (295 aa).

Positions 29, 31, 56, 77, 102, and 128 each coordinate S-adenosyl-L-methionine.

The protein belongs to the class I-like SAM-binding methyltransferase superfamily. rRNA adenine N(6)-methyltransferase family. RsmA subfamily.

The protein localises to the cytoplasm. The catalysed reaction is adenosine(1518)/adenosine(1519) in 16S rRNA + 4 S-adenosyl-L-methionine = N(6)-dimethyladenosine(1518)/N(6)-dimethyladenosine(1519) in 16S rRNA + 4 S-adenosyl-L-homocysteine + 4 H(+). Specifically dimethylates two adjacent adenosines (A1518 and A1519) in the loop of a conserved hairpin near the 3'-end of 16S rRNA in the 30S particle. May play a critical role in biogenesis of 30S subunits. The polypeptide is Ribosomal RNA small subunit methyltransferase A (Listeria welshimeri serovar 6b (strain ATCC 35897 / DSM 20650 / CCUG 15529 / CIP 8149 / NCTC 11857 / SLCC 5334 / V8)).